A 131-amino-acid chain; its full sequence is Hyastatin (131 aa).

The first 16 residues, 1–16 (MRVLLILVSLAALAHA), serve as a signal peptide directing secretion. 3 disulfide bridges follow: Cys103–Cys117, Cys107–Cys124, and Cys118–Cys125. At Lys130 the chain carries Lysine amide.

Strongly expressed in hemocytes, with weaker expression in gills and epidermis. Expressed at low levels in hepatopancreas.

Its subcellular location is the cytoplasmic granule. Its function is as follows. Antimicrobial peptide. Has strong antibacterial activity against the Gram-positive bacterium C.glutamicum (MIC=0.4 uM) and the Gram-negative bacterium E.coli (MIC=12.5 uM). Has weak antibacterial activity against the Gram-positive bacterium S.aureus (MIC&gt;50 uM) and the Gram-negative bacterium P.aeruginosa (MIC&gt;50 uM). Has antifungal activity against S.cerevisiae (MIC=12.5) and C.albicans (MIC=6.3 uM). Has weak antifungal activity against the mold B.cinerea. Presents chitin-binding activity. The polypeptide is Hyastatin (Hyas araneus (Atlantic lyre crab)).